Reading from the N-terminus, the 395-residue chain is Elongation factor Tu (395 aa).

A tr-type G domain is found at 10 to 204 (KTHANIGTIG…AVDSYIPTPE (195 aa)). Residues 19–26 (GHVDHGKT) form a G1 region. 19 to 26 (GHVDHGKT) serves as a coordination point for GTP. A Mg(2+)-binding site is contributed by T26. Residues 60 to 64 (GITIN) form a G2 region. A G3 region spans residues 81–84 (DCPG). GTP is bound by residues 81 to 85 (DCPGH) and 136 to 139 (NKCD). The segment at 136-139 (NKCD) is G4. Residues 174 to 176 (SAL) are G5.

The protein belongs to the TRAFAC class translation factor GTPase superfamily. Classic translation factor GTPase family. EF-Tu/EF-1A subfamily. In terms of assembly, monomer.

The protein resides in the cytoplasm. It carries out the reaction GTP + H2O = GDP + phosphate + H(+). GTP hydrolase that promotes the GTP-dependent binding of aminoacyl-tRNA to the A-site of ribosomes during protein biosynthesis. This chain is Elongation factor Tu, found in Lysinibacillus sphaericus (strain C3-41).